The following is an 897-amino-acid chain: MSGVSSNDCPHLECVGEITKEELIQKSHGQCQDCKVGGPNLWACLENGCSYVGCGESHADHSTVHSQETRHNLTVNLTTLRVWCYACTKEVFLERKLGPHKQLPNAAKAVSPVQTPCQDLNTPGSPTSLRVPSAGTCDDLDMETEEEDELRTRGLTGLKNIGNTCYMNAALQALSNCPPLTQFFLECGGLVKTDKKPALCKSYQKLITDLWHKNRNAYVVPTNLFQGIKAVNPMFRGYSQQDSQEFLRCLMDQLHEELKELIPEPEDPNQAVAMDDSPDEDNHSQSDDFQSCESCGSSDRADNEGPRVPEDINEAEMLMPEQNQNNRDWQKEKNLINNLYRAGSHGDLDKDVDTTSDSRPIISSQGAIKAQGRTSDSEIQVSSTVRPQSPTGNEGITSRLSSSPPKSSAWPNLSSTHKKVPMFTPTKTKRQRKYHSIISEVFDGTIVSSVQCLTCDRVSVTLENFQDISLPIPGKEDLAKLHSSSHQTALVKAGSCGEAYAPQGWIAFVMEYIKSWFWGPVVTLQDCLAAFFARDELKGDNMYSCEKCKKLRNGVKFCKVQSLPEILCIHLKRFRHELMFSTKIGTHVSFPLEGLEMQPFLAKDSSALTTTYDLLSVICHHGTASSGHYIAYCRNELNQLWYEFDDQSVTEVSESCVQNAEAYVLFYKKSNDETQKERRKVTSLFNMMEPSLLQFYVSRQWLNKFKTFAEPGPISNHDFLCAHGGIPPNKAAYIDDLVLMIPQNVWDHLYSRYGGGPAVNHLYVCHTCQNEIEKLEKRRKNELDMFVRLNKAFQEEESPVVIYCISMQWFREWESFVKGKDIDPPGPIDNSKIAVNKNGHITLKPGADSGQISEETWNFLHNIHGGGPVVTVRPSVSHQESETSQSEEKIEVETRTV.

Residues 7–110 (NDCPHLECVG…KQLPNAAKAV (104 aa)) form a UBP-type zinc finger. The Zn(2+) site is built by Cys-9, His-11, Cys-31, Cys-34, Cys-44, Cys-49, Cys-54, His-61, His-65, His-71, Cys-84, and Cys-87. The USP domain maps to 156–670 (TGLKNIGNTC…EAYVLFYKKS (515 aa)). The Nucleophile role is filled by Cys-165. Disordered regions lie at residues 261–308 (LIPE…GPRV) and 343–420 (GSHG…HKKV). The segment covering 287 to 297 (DDFQSCESCGS) has biased composition (polar residues). 2 stretches are compositionally biased toward basic and acidic residues: residues 299-308 (DRADNEGPRV) and 344-353 (SHGDLDKDVD). Polar residues predominate over residues 355 to 396 (TSDSRPIISSQGAIKAQGRTSDSEIQVSSTVRPQSPTGNEGI). Residues 398–411 (SRLSSSPPKSSAWP) show a composition bias toward low complexity. Catalysis depends on His-628, which acts as the Proton acceptor. 2 consecutive DUSP domains span residues 672–765 (DETQ…LYVC) and 773–876 (EKLE…RPSV). The span at 875–884 (SVSHQESETS) shows a compositional bias: low complexity. The disordered stretch occupies residues 875-897 (SVSHQESETSQSEEKIEVETRTV). The span at 886 to 897 (SEEKIEVETRTV) shows a compositional bias: basic and acidic residues.

The protein belongs to the peptidase C19 family. USP20/USP33 subfamily.

It is found in the cytoplasm. The protein localises to the perinuclear region. Its subcellular location is the cytoskeleton. It localises to the microtubule organizing center. The protein resides in the centrosome. It carries out the reaction Thiol-dependent hydrolysis of ester, thioester, amide, peptide and isopeptide bonds formed by the C-terminal Gly of ubiquitin (a 76-residue protein attached to proteins as an intracellular targeting signal).. Deubiquitinating enzyme involved in various processes such as centrosome duplication, cellular migration and beta-2 adrenergic receptor/ADRB2 recycling. Involved in regulation of centrosome duplication by mediating deubiquitination of ccp110 in S and G2/M phase, leading to stabilize ccp110 during the period which centrioles duplicate and elongate. Involved in cell migration via its interaction with intracellular domain of robo1, leading to regulate the Slit signaling. Plays a role in commissural axon guidance cross the ventral midline of the neural tube in a Slit-dependent manner, possibly by mediating the deubiquitination of robo1. Acts as a regulator of G-protein coupled receptor (GPCR) signaling by mediating the deubiquitination of beta-arrestins (arrb1 and arrb2) and beta-2 adrenergic receptor (adrb2). Deubiquitinates dio2, thereby regulating thyroid hormone regulation. Mediates deubiquitination of both 'Lys-48'- and 'Lys-63'-linked polyubiquitin chains. The chain is Ubiquitin carboxyl-terminal hydrolase 33 (usp33) from Danio rerio (Zebrafish).